We begin with the raw amino-acid sequence, 122 residues long: uncharacterized protein (122 aa).

It is found in the mitochondrion. This is an uncharacterized protein from Arabidopsis thaliana (Mouse-ear cress).